Reading from the N-terminus, the 311-residue chain is Ribosomal RNA small subunit methyltransferase H (311 aa).

Residues 33-35 (AGH), aspartate 53, phenylalanine 80, aspartate 101, and glutamine 108 each bind S-adenosyl-L-methionine.

Belongs to the methyltransferase superfamily. RsmH family.

Its subcellular location is the cytoplasm. It carries out the reaction cytidine(1402) in 16S rRNA + S-adenosyl-L-methionine = N(4)-methylcytidine(1402) in 16S rRNA + S-adenosyl-L-homocysteine + H(+). Its function is as follows. Specifically methylates the N4 position of cytidine in position 1402 (C1402) of 16S rRNA. The polypeptide is Ribosomal RNA small subunit methyltransferase H (Alkaliphilus oremlandii (strain OhILAs) (Clostridium oremlandii (strain OhILAs))).